The sequence spans 217 residues: Glutathione S-transferase 1 (217 aa).

One can recognise a GST N-terminal domain in the interval 1–83 (MVMTLYKLDA…YLVSKYGADD (83 aa)). Residues Ser11, 53–55 (HTV), and 67–69 (DSH) contribute to the glutathione site. A GST C-terminal domain is found at 89–211 (DPKKRAIVDQ…APGNDLCKDL (123 aa)).

The protein belongs to the GST superfamily. Theta family. As to quaternary structure, homodimer.

The catalysed reaction is RX + glutathione = an S-substituted glutathione + a halide anion + H(+). Conjugation of reduced glutathione to a wide number of exogenous and endogenous hydrophobic electrophiles. The chain is Glutathione S-transferase 1 (GST1) from Manduca sexta (Tobacco hawkmoth).